A 576-amino-acid chain; its full sequence is Formate--tetrahydrofolate ligase 1 (576 aa).

69 to 76 is a binding site for ATP; it reads TPLGEGKT.

Belongs to the formate--tetrahydrofolate ligase family.

It carries out the reaction (6S)-5,6,7,8-tetrahydrofolate + formate + ATP = (6R)-10-formyltetrahydrofolate + ADP + phosphate. It functions in the pathway one-carbon metabolism; tetrahydrofolate interconversion. The chain is Formate--tetrahydrofolate ligase 1 from Rubrobacter xylanophilus (strain DSM 9941 / JCM 11954 / NBRC 16129 / PRD-1).